A 128-amino-acid chain; its full sequence is Sulfurtransferase TusD (128 aa).

Residue Cys78 is the Cysteine persulfide intermediate of the active site.

This sequence belongs to the DsrE/TusD family. In terms of assembly, heterohexamer, formed by a dimer of trimers. The hexameric TusBCD complex contains 2 copies each of TusB, TusC and TusD. The TusBCD complex interacts with TusE.

It is found in the cytoplasm. Part of a sulfur-relay system required for 2-thiolation of 5-methylaminomethyl-2-thiouridine (mnm(5)s(2)U) at tRNA wobble positions. Accepts sulfur from TusA and transfers it in turn to TusE. The sequence is that of Sulfurtransferase TusD from Citrobacter koseri (strain ATCC BAA-895 / CDC 4225-83 / SGSC4696).